The chain runs to 181 residues: Ribulose bisphosphate carboxylase small subunit, chloroplastic 1 (181 aa).

The N-terminal 57 residues, 1-57, are a transit peptide targeting the chloroplast; that stretch reads MASSIVSSAAVATRSNVAQASMVAPFTGLKSAASFPVTKKNNNVDITSLASNGGRVR.

Belongs to the RuBisCO small chain family. As to quaternary structure, heterohexadecamer of 8 large and 8 small subunits.

The protein localises to the plastid. It localises to the chloroplast. Functionally, ruBisCO catalyzes two reactions: the carboxylation of D-ribulose 1,5-bisphosphate, the primary event in carbon dioxide fixation, as well as the oxidative fragmentation of the pentose substrate. Both reactions occur simultaneously and in competition at the same active site. Although the small subunit is not catalytic it is essential for maximal activity. The sequence is that of Ribulose bisphosphate carboxylase small subunit, chloroplastic 1 from Solanum tuberosum (Potato).